The primary structure comprises 490 residues: Betaine aldehyde dehydrogenase (490 aa).

K(+) contacts are provided by threonine 26 and aspartate 93. 150–152 (GAW) provides a ligand contact to NAD(+). Lysine 162 serves as the catalytic Charge relay system. 176-179 (KPSE) contacts NAD(+). Valine 180 contacts K(+). Position 230–233 (230–233 (GVAT)) interacts with NAD(+). Leucine 246 serves as a coordination point for K(+). The Proton acceptor role is filled by glutamate 252. Residues glycine 254, cysteine 286, and glutamate 387 each coordinate NAD(+). Cysteine 286 acts as the Nucleophile in catalysis. Position 286 is a cysteine sulfenic acid (-SOH) (cysteine 286). The K(+) site is built by lysine 457 and glycine 460. Catalysis depends on glutamate 464, which acts as the Charge relay system.

The protein belongs to the aldehyde dehydrogenase family. In terms of assembly, dimer of dimers. K(+) serves as cofactor.

It catalyses the reaction betaine aldehyde + NAD(+) + H2O = glycine betaine + NADH + 2 H(+). It participates in amine and polyamine biosynthesis; betaine biosynthesis via choline pathway; betaine from betaine aldehyde: step 1/1. Its function is as follows. Involved in the biosynthesis of the osmoprotectant glycine betaine. Catalyzes the irreversible oxidation of betaine aldehyde to the corresponding acid. The protein is Betaine aldehyde dehydrogenase of Stenotrophomonas maltophilia (strain R551-3).